Reading from the N-terminus, the 602-residue chain is Carbon catabolite repressor protein 4 homolog 1 (602 aa).

A disordered region spans residues 113-136; that stretch reads ASAATEGNDEEELPRLNSSGSGSG. Mg(2+) is bound at residue glutamate 299.

This sequence belongs to the CCR4/nocturin family. In terms of assembly, component of the CCR4-NOT complex, at least composed of CRR4 and CAF1 proteins. Mg(2+) is required as a cofactor.

It localises to the nucleus. The protein localises to the cytoplasm. It catalyses the reaction Exonucleolytic cleavage of poly(A) to 5'-AMP.. Its function is as follows. Acts as a catalytic component of the CCR4-NOT core complex, which in the nucleus seems to be a general transcription factor, and in the cytoplasm the major mRNA deadenylase involved in mRNA turnover. This chain is Carbon catabolite repressor protein 4 homolog 1 (CCR4-1), found in Arabidopsis thaliana (Mouse-ear cress).